The chain runs to 298 residues: Glyoxalase domain-containing protein 4 (298 aa).

The VOC 1 domain maps to 5-130 (RALHFVFKVG…GGYKFYLQDR (126 aa)). At Lys-109 the chain carries N6-succinyllysine. At Ser-131 the chain carries Phosphoserine. In terms of domain architecture, VOC 2 spans 137-258 (PVLKVTLAVS…DGHEICFVGD (122 aa)). Position 273 is an N6-succinyllysine (Lys-273).

This sequence belongs to the glyoxalase I family. In terms of assembly, interacts with NUDT9.

It localises to the mitochondrion. The sequence is that of Glyoxalase domain-containing protein 4 (Glod4) from Rattus norvegicus (Rat).